The following is a 105-amino-acid chain: Large ribosomal subunit protein bL21 (105 aa).

The protein belongs to the bacterial ribosomal protein bL21 family. As to quaternary structure, part of the 50S ribosomal subunit. Contacts protein L20.

Functionally, this protein binds to 23S rRNA in the presence of protein L20. The chain is Large ribosomal subunit protein bL21 from Natranaerobius thermophilus (strain ATCC BAA-1301 / DSM 18059 / JW/NM-WN-LF).